The chain runs to 107 residues: Small ribosomal subunit protein uS17 (107 aa).

Belongs to the universal ribosomal protein uS17 family. As to quaternary structure, part of the 30S ribosomal subunit.

Its function is as follows. One of the primary rRNA binding proteins, it binds specifically to the 5'-end of 16S ribosomal RNA. The sequence is that of Small ribosomal subunit protein uS17 from Nitrosopumilus maritimus (strain SCM1).